A 300-amino-acid polypeptide reads, in one-letter code: MSWLTEYVRPKIRGLLKREVPDNLWTNCESCSQMILVKDLQKAMNVCPHCGHHMRASVAERFGWTFDEGTFTRIELPKVPVDPLSFRDRKRYTERLKDERSKSQLDESMAVAHGRIGGHDAVVAVMAFEFIAGTMGAALGEAFLAAARLAILQKAPLVVFTASGGARMQEGMVSLMQMPRTTVAVQMLRDAGLPYIVVLTNPTTGGVTASFAMLGDVQISEPNALIGFAGQRVIEDTVREKLPEGFQRAEYLLDHGMIDMVVKRPALPEMLGRLIGLMNHRHVNAPGAALGGAAPVRPAA.

The CoA carboxyltransferase N-terminal domain maps to 24–293; that stretch reads LWTNCESCSQ…NAPGAALGGA (270 aa). The Zn(2+) site is built by Cys28, Cys31, Cys47, and Cys50. The C4-type zinc finger occupies 28 to 50; the sequence is CESCSQMILVKDLQKAMNVCPHC.

The protein belongs to the AccD/PCCB family. As to quaternary structure, acetyl-CoA carboxylase is a heterohexamer composed of biotin carboxyl carrier protein (AccB), biotin carboxylase (AccC) and two subunits each of ACCase subunit alpha (AccA) and ACCase subunit beta (AccD). The cofactor is Zn(2+).

The protein resides in the cytoplasm. It catalyses the reaction N(6)-carboxybiotinyl-L-lysyl-[protein] + acetyl-CoA = N(6)-biotinyl-L-lysyl-[protein] + malonyl-CoA. The protein operates within lipid metabolism; malonyl-CoA biosynthesis; malonyl-CoA from acetyl-CoA: step 1/1. Functionally, component of the acetyl coenzyme A carboxylase (ACC) complex. Biotin carboxylase (BC) catalyzes the carboxylation of biotin on its carrier protein (BCCP) and then the CO(2) group is transferred by the transcarboxylase to acetyl-CoA to form malonyl-CoA. The sequence is that of Acetyl-coenzyme A carboxylase carboxyl transferase subunit beta from Gluconacetobacter diazotrophicus (strain ATCC 49037 / DSM 5601 / CCUG 37298 / CIP 103539 / LMG 7603 / PAl5).